Reading from the N-terminus, the 364-residue chain is DNA replication and repair protein RecF (364 aa).

33 to 40 (GENGSGKT) serves as a coordination point for ATP.

The protein belongs to the RecF family.

It localises to the cytoplasm. The RecF protein is involved in DNA metabolism; it is required for DNA replication and normal SOS inducibility. RecF binds preferentially to single-stranded, linear DNA. It also seems to bind ATP. This Rickettsia felis (strain ATCC VR-1525 / URRWXCal2) (Rickettsia azadi) protein is DNA replication and repair protein RecF.